Consider the following 1101-residue polypeptide: Protein diaphanous homolog 2 (1101 aa).

N-acetylmethionine is present on Met1. Positions 1 to 44 are disordered; it reads MEQPGAAASGAGGGSEEPGGGRSNKRSAGNRAANEEETKNKPKL. The span at 10–22 shows a compositional bias: gly residues; it reads GAGGGSEEPGGGR. Positions 98-464 constitute a GBD/FH3 domain; the sequence is SLNLSEKEVL…QIVLHCSGMD (367 aa). Coiled coils occupy residues 366–418 and 487–547; these read KEKE…MLKD and KAKV…SSSG. Polar residues predominate over residues 536-546; the sequence is RTQAQVLSSSS. Disordered stretches follow at residues 536 to 594, 1010 to 1048, and 1070 to 1101; these read RTQA…PPPP, NKRR…DINK, and RDRR…ISSK. A compositionally biased stretch (pro residues) spans 549–594; it reads PGPPAAPPLPGVGPPPPPPAPPLPGGAPLPPPPPPLPGMMGIPPPP. In terms of domain architecture, FH1 spans 549–623; the sequence is PGPPAAPPLP…PPPGISLNLP (75 aa). Residues 628–1028 form the FH2 domain; it reads QKKMYKPEVS…TRRAKLAKEK (401 aa). Residues 903 to 1053 adopt a coiled-coil conformation; it reads SASKVSAQIL…IDINKEGDET (151 aa). Composition is skewed to basic and acidic residues over residues 1010-1035 and 1078-1090; these read NKRR…EKLE and RNPD…LERS. Residues 1051–1081 enclose the DAD domain; the sequence is DETGVMDNLLEALQSGAAFRDRRKRIPRNPD.

The protein belongs to the formin homology family. Diaphanous subfamily. In terms of assembly, isoform 3 interacts with RHOD in the GTP-bound form. In terms of tissue distribution, expressed in testis, ovary, small intestine, prostate, lung, liver, kidney and leukocytes.

The protein resides in the cytoplasm. It localises to the cytosol. It is found in the early endosome. In terms of biological role, could be involved in oogenesis. Involved in the regulation of endosome dynamics. Implicated in a novel signal transduction pathway, in which isoform 3 and CSK are sequentially activated by RHOD to regulate the motility of early endosomes through interactions with the actin cytoskeleton. The sequence is that of Protein diaphanous homolog 2 (DIAPH2) from Homo sapiens (Human).